Reading from the N-terminus, the 472-residue chain is Pyridine nucleotide-disulfide oxidoreductase domain-containing protein 1 (472 aa).

Belongs to the class-I pyridine nucleotide-disulfide oxidoreductase family. PYROXD1 subfamily. Requires FAD as cofactor.

Functionally, probable oxidoreductase. The sequence is that of Pyridine nucleotide-disulfide oxidoreductase domain-containing protein 1 from Drosophila melanogaster (Fruit fly).